The following is a 216-amino-acid chain: Homeobox-leucine zipper protein ATHB-40 (216 aa).

Positions 28–52 (GEVKQPKRRRKKTKGSVASADGGNG) are disordered. The segment at residues 52–111 (GLFRKRKLTDEQVNMLEMSFGDEHKLESERKDRLAAELGLDPRQVAVWFQNRRARWKNKR) is a DNA-binding region (homeobox). Positions 112 to 140 (LEEEYNKLKNSHDNVVVDKCRLESEVIQL) are leucine-zipper.

The protein belongs to the HD-ZIP homeobox family. Class I subfamily. In terms of tissue distribution, expressed in roots, flowers and siliques.

The protein resides in the nucleus. In terms of biological role, probable transcription factor. The sequence is that of Homeobox-leucine zipper protein ATHB-40 (ATHB-40) from Arabidopsis thaliana (Mouse-ear cress).